We begin with the raw amino-acid sequence, 115 residues long: NAD(P)H-quinone oxidoreductase subunit M (115 aa).

The protein belongs to the complex I NdhM subunit family. As to quaternary structure, NDH-1 can be composed of about 15 different subunits; different subcomplexes with different compositions have been identified which probably have different functions.

It is found in the cellular thylakoid membrane. The catalysed reaction is a plastoquinone + NADH + (n+1) H(+)(in) = a plastoquinol + NAD(+) + n H(+)(out). It catalyses the reaction a plastoquinone + NADPH + (n+1) H(+)(in) = a plastoquinol + NADP(+) + n H(+)(out). In terms of biological role, NDH-1 shuttles electrons from an unknown electron donor, via FMN and iron-sulfur (Fe-S) centers, to quinones in the respiratory and/or the photosynthetic chain. The immediate electron acceptor for the enzyme in this species is believed to be plastoquinone. Couples the redox reaction to proton translocation, and thus conserves the redox energy in a proton gradient. Cyanobacterial NDH-1 also plays a role in inorganic carbon-concentration. This chain is NAD(P)H-quinone oxidoreductase subunit M, found in Trichodesmium erythraeum (strain IMS101).